Consider the following 124-residue polypeptide: uncharacterized protein (124 aa).

The N-terminal stretch at 1–19 is a signal peptide; sequence MRLLVQKVILIYLARYAKS. 2 helical membrane-spanning segments follow: residues 37–57 and 86–108; these read IAEF…GVKF and LGAL…IIII.

Its subcellular location is the membrane. This is an uncharacterized protein from Saccharomyces cerevisiae (strain ATCC 204508 / S288c) (Baker's yeast).